A 169-amino-acid chain; its full sequence is Ribosome maturation factor RimP (169 aa).

Belongs to the RimP family.

The protein resides in the cytoplasm. Its function is as follows. Required for maturation of 30S ribosomal subunits. In Coprothermobacter proteolyticus (strain ATCC 35245 / DSM 5265 / OCM 4 / BT), this protein is Ribosome maturation factor RimP.